A 375-amino-acid polypeptide reads, in one-letter code: 4,4'-diaponeurosporenoate glycosyltransferase (375 aa).

4 helical membrane passes run 3 to 23, 164 to 184, 277 to 297, and 330 to 350; these read WLSR…ALIF, FYEG…NVFS, IMAA…GLCL, and FSNL…KIFI.

The protein belongs to the glycosyltransferase 2 family. CrtQ subfamily.

The protein localises to the cell membrane. The protein operates within carotenoid biosynthesis; staphyloxanthin biosynthesis; staphyloxanthin from farnesyl diphosphate: step 4/5. In terms of biological role, catalyzes the glycosylation of 4,4'-diaponeurosporenoate, i.e. the esterification of glucose at the C1'' position with the carboxyl group of 4,4'-diaponeurosporenic acid, to form glycosyl-4,4'-diaponeurosporenoate. This is a step in the biosynthesis of staphyloxanthin, an orange pigment present in most staphylococci strains. The polypeptide is 4,4'-diaponeurosporenoate glycosyltransferase (crtQ) (Staphylococcus aureus (strain bovine RF122 / ET3-1)).